Reading from the N-terminus, the 151-residue chain is Methylglyoxal synthase (151 aa).

In terms of domain architecture, MGS-like spans 6–151 (RTMPAHKHVA…DYEAYLAERM (146 aa)). Residues H19, K23, 45–48 (TGTT), and 65–66 (SG) each bind substrate. D71 serves as the catalytic Proton donor/acceptor. Residue H98 coordinates substrate.

It belongs to the methylglyoxal synthase family.

The enzyme catalyses dihydroxyacetone phosphate = methylglyoxal + phosphate. In terms of biological role, catalyzes the formation of methylglyoxal from dihydroxyacetone phosphate. This chain is Methylglyoxal synthase, found in Vibrio parahaemolyticus serotype O3:K6 (strain RIMD 2210633).